A 432-amino-acid polypeptide reads, in one-letter code: Adenylosuccinate synthetase (432 aa).

GTP contacts are provided by residues 13–19 (GDEGKGK) and 41–43 (GHT). Asp14 functions as the Proton acceptor in the catalytic mechanism. Mg(2+) is bound by residues Asp14 and Gly41. IMP-binding positions include 14–17 (DEGK), 39–42 (NAGH), Thr130, Arg144, Gln225, Thr240, and Arg304. The active-site Proton donor is the His42. 300 to 306 (ATTGRRR) lines the substrate pocket. Residues Arg306, 332 to 334 (KLD), and 415 to 417 (STG) contribute to the GTP site.

The protein belongs to the adenylosuccinate synthetase family. As to quaternary structure, homodimer. Mg(2+) is required as a cofactor.

The protein localises to the cytoplasm. The catalysed reaction is IMP + L-aspartate + GTP = N(6)-(1,2-dicarboxyethyl)-AMP + GDP + phosphate + 2 H(+). The protein operates within purine metabolism; AMP biosynthesis via de novo pathway; AMP from IMP: step 1/2. In terms of biological role, plays an important role in the de novo pathway of purine nucleotide biosynthesis. Catalyzes the first committed step in the biosynthesis of AMP from IMP. This Salmonella paratyphi C (strain RKS4594) protein is Adenylosuccinate synthetase.